Reading from the N-terminus, the 509-residue chain is Maturase K (509 aa).

The protein belongs to the intron maturase 2 family. MatK subfamily.

The protein localises to the plastid. It localises to the chloroplast. Usually encoded in the trnK tRNA gene intron. Probably assists in splicing its own and other chloroplast group II introns. This chain is Maturase K, found in Otacanthus azureus (Brazilian snapdragon).